Reading from the N-terminus, the 403-residue chain is Histidine--tRNA ligase (403 aa).

It belongs to the class-II aminoacyl-tRNA synthetase family. Homodimer.

The protein localises to the cytoplasm. It catalyses the reaction tRNA(His) + L-histidine + ATP = L-histidyl-tRNA(His) + AMP + diphosphate + H(+). This Aquifex aeolicus (strain VF5) protein is Histidine--tRNA ligase (hisS).